We begin with the raw amino-acid sequence, 79 residues long: Major outer membrane lipoprotein Lpp 3 (79 aa).

The signal sequence occupies residues 1–21 (MNRTNKLILGAVVLGSALLAG). A lipid anchor (N-palmitoyl cysteine) is attached at cysteine 22. Cysteine 22 carries S-diacylglycerol cysteine lipidation. Repeats lie at residues 25–35 (NAKIDQLSSDV) and 39–49 (SAKVDQLSNDV). Positions 28 to 76 (IDQLSSDVQTLSAKVDQLSNDVNAMRSDVQAAKDDAARANQRLDNKVLR) form a coiled coil. Lysine 79 bears the N6-murein peptidoglycan lysine mark.

The protein belongs to the Lpp family. In terms of assembly, homotrimer.

It is found in the cell outer membrane. Its subcellular location is the secreted. The protein resides in the cell wall. A highly abundant outer membrane lipoprotein that controls the distance between the inner and outer membranes. The only protein known to be covalently linked to the peptidoglycan network (PGN). Also non-covalently binds the PGN. The link between the cell outer membrane and PGN contributes to maintenance of the structural and functional integrity of the cell envelope, and maintains the correct distance between the PGN and the outer membrane. This is Major outer membrane lipoprotein Lpp 3 from Salmonella paratyphi A (strain ATCC 9150 / SARB42).